We begin with the raw amino-acid sequence, 433 residues long: MLNFISKPVGCLKGEITVPGDKSISHRSIIFGAIAIGTSVIDGFLDGEDCIATLKAFQSMGVRIEGPDKQRVIIHGVGKYGLKQPQNIIDCVNSGTSMRLLAGLLAAQQFDSQLTGDESLLKRPMLRISRPLSQMGADVTTQDGKPPIVIKGGKKLNGIHYVMPEASAQVKSCLLLAGMYAEGQTKITENAVSRDHTERMLRTFSYPVQIQDGAIVIDRNGECHGTRLNIPGDISSAAFFIVAASITPGSDVLIRNVGINPTRTGIIHILTEMGADIRVLNQRAYGEEPVADLHIRYSQLKGIDIPASMVPLAIDEFPVIFIAAACAQGKTTLHGAKELRLKESDRIGAMVDGLNQLGVHAEGFDDGILIEGGSIQGGEVNSRGDHRIAMSFAIAGAVASAPVTIKNCANVATSFPSFVTTANMLHFQIEEYS.

Residues lysine 22, serine 23, and arginine 27 each coordinate 3-phosphoshikimate. Lysine 22 is a binding site for phosphoenolpyruvate. Phosphoenolpyruvate-binding residues include glycine 95 and arginine 123. The 3-phosphoshikimate site is built by serine 167, glutamine 169, aspartate 315, and lysine 342. Residue glutamine 169 participates in phosphoenolpyruvate binding. Aspartate 315 functions as the Proton acceptor in the catalytic mechanism. Arginine 346 and arginine 387 together coordinate phosphoenolpyruvate.

The protein belongs to the EPSP synthase family. Monomer.

Its subcellular location is the cytoplasm. It carries out the reaction 3-phosphoshikimate + phosphoenolpyruvate = 5-O-(1-carboxyvinyl)-3-phosphoshikimate + phosphate. It participates in metabolic intermediate biosynthesis; chorismate biosynthesis; chorismate from D-erythrose 4-phosphate and phosphoenolpyruvate: step 6/7. Functionally, catalyzes the transfer of the enolpyruvyl moiety of phosphoenolpyruvate (PEP) to the 5-hydroxyl of shikimate-3-phosphate (S3P) to produce enolpyruvyl shikimate-3-phosphate and inorganic phosphate. This chain is 3-phosphoshikimate 1-carboxyvinyltransferase, found in Legionella pneumophila (strain Paris).